The following is a 28-amino-acid chain: U-actitoxin-Ate1 (28 aa).

A signal peptide spans 1–15 (MSLILIFFAFTVLKS). A disulfide bond links Cys20 and Cys26.

In terms of assembly, monomer in solution. Post-translationally, may be N-glycosylated at Asn-22. Activity with this modification has not be tested. As to expression, highly expressed in the tentacles. Weakly expressed in acrorhagi and mesenteric filaments.

The protein localises to the secreted. It is found in the nematocyst. Probable toxin expected to be employed in prey capture and/or defense against predators (based on its abundance in tentacles). Has only a weak affinity for lipid membranes. Shows moderate cytotoxic activity against breast cancer cell lines (MCF-7 and MDA-MB-231). The protein is U-actitoxin-Ate1 of Actinia tenebrosa (Australian red waratah sea anemone).